Consider the following 204-residue polypeptide: Kunitz-type trypsin inhibitor KTI2 (204 aa).

Positions 1–25 are cleaved as a signal peptide; that stretch reads MKSTIFFALFLVCAFTISYLPSATA. 2 cysteine pairs are disulfide-bonded: cysteine 65-cysteine 112 and cysteine 160-cysteine 169.

The protein belongs to the protease inhibitor I3 (leguminous Kunitz-type inhibitor) family. In terms of tissue distribution, seed, and at low levels in leaf, root, and stem.

Its function is as follows. Has probably no trypsin inhibitor activity. KTi2 is responsible for most of the Kunitz trypsin inhibitor activity and protein found in soybean seeds. The protein is Kunitz-type trypsin inhibitor KTI2 (KTI2) of Glycine max (Soybean).